We begin with the raw amino-acid sequence, 982 residues long: Serine/threonine-protein kinase SULU (982 aa).

The Protein kinase domain occupies 30 to 289; that stretch reads YQDLREIGHG…AEECFRHPFI (260 aa). ATP is bound by residues 36–44 and Lys-59; that span reads IGHGSFGAV. Asp-153 (proton acceptor) is an active-site residue. Disordered stretches follow at residues 331–484, 592–620, 751–789, and 957–982; these read GKEG…PLDT, QNNE…QNQQ, LETQ…RDLK, and RTGS…QMAM. Residues 353–373 are compositionally biased toward low complexity; sequence SIGRAGDSASSRSASLTSFRS. Polar residues predominate over residues 421–431; that stretch reads QMLSSTSTSGV. Residues 459–472 show a composition bias toward low complexity; the sequence is IPTSQPTSKSESSS. Basic and acidic residues predominate over residues 595 to 608; it reads ELDKRKKDIEDGEK. The span at 759–768 shows a compositional bias: polar residues; it reads SASQNEYTQR. Residues 957–967 show a composition bias toward low complexity; sequence RTGSTSRSSGG. Over residues 973-982 the composition is skewed to polar residues; the sequence is GNSSSIQMAM.

Belongs to the protein kinase superfamily. Ser/Thr protein kinase family. STE20 subfamily. The cofactor is Mg(2+). In terms of tissue distribution, expressed in the pharynx, including the pharyngeal muscle of the metacorpus, the isthmus, and the terminal bulb; in the intestine, including the pharyngeointestinal valve between the pharynx and the intestine, a structure near the anus likely to be the anal sphincter and the excretory cell and in several ring neurons.

The protein localises to the cytoplasm. It is found in the cytoskeleton. It localises to the cell cortex. It catalyses the reaction L-seryl-[protein] + ATP = O-phospho-L-seryl-[protein] + ADP + H(+). The enzyme catalyses L-threonyl-[protein] + ATP = O-phospho-L-threonyl-[protein] + ADP + H(+). Its function is as follows. Acts as a negative regulator of cortical contractions during early embryonic cell division, possibly by regulating rho-1-dependent actomyosin contractility. Plays a role in polarity establishment in early embryos by regulating the size of the anterior and posterior cortex in the first asymmetric cell division. Might play a role in cell cycle progression. In the germline, involved in the regulation of meiotic progression during oogenesis, possibly by modulating the timing of mpk-1 activation. Plays a role in meiotic recombination events. Involved in pharyngeal pumping. The polypeptide is Serine/threonine-protein kinase SULU (kin-18) (Caenorhabditis elegans).